The primary structure comprises 384 residues: Opsin-3 (384 aa).

At methionine 1–alanine 62 the chain is on the extracellular side. The N-linked (GlcNAc...) asparagine glycan is linked to asparagine 4. A helical membrane pass occupies residues leucine 63–phenylalanine 83. Topologically, residues serine 84–asparagine 94 are cytoplasmic. Residues methionine 95–isoleucine 115 traverse the membrane as a helical segment. Residues methionine 116–valine 132 are Extracellular-facing. Cysteine 130 and cysteine 207 are oxidised to a cystine. Residues tyrosine 133–phenylalanine 153 traverse the membrane as a helical segment. At aspartate 154 to glutamine 171 the chain is on the cytoplasmic side. Residues alanine 172–phenylalanine 192 traverse the membrane as a helical segment. Residues arginine 193 to glutamate 219 are Extracellular-facing. A helical transmembrane segment spans residues valine 220–phenylalanine 240. The Cytoplasmic portion of the chain corresponds to tyrosine 241–lysine 284. A helical transmembrane segment spans residues valine 285–methionine 305. Topologically, residues threonine 306 to arginine 312 are extracellular. The chain crosses the membrane as a helical span at residues threonine 313–isoleucine 333. Topologically, residues aspartate 334–alanine 384 are cytoplasmic.

It belongs to the G-protein coupled receptor 1 family. Opsin subfamily. As to expression, in the retina, expression is essentially uniformly distributed but a higher level is seen in the ventral region where the B-cells are localized.

Its subcellular location is the membrane. In terms of biological role, visual pigments are the light-absorbing molecules that mediate vision. They consist of an apoprotein, opsin, covalently linked to cis-retinal. May play a role in photoperiodic photoreception. The chain is Opsin-3 (OP3) from Manduca sexta (Tobacco hawkmoth).